Here is an 841-residue protein sequence, read N- to C-terminus: Alpha-glucan phosphorylase 2, cytosolic (841 aa).

Residues 1 to 24 (MANANGKAATSLPEKISAKANPEA) form a disordered region. Lysine 687 carries the post-translational modification N6-(pyridoxal phosphate)lysine.

It belongs to the glycogen phosphorylase family. Requires pyridoxal 5'-phosphate as cofactor.

The protein resides in the cytoplasm. The catalysed reaction is [(1-&gt;4)-alpha-D-glucosyl](n) + phosphate = [(1-&gt;4)-alpha-D-glucosyl](n-1) + alpha-D-glucose 1-phosphate. Functionally, phosphorylase is an important allosteric enzyme in carbohydrate metabolism. Enzymes from different sources differ in their regulatory mechanisms and in their natural substrates. However, all known phosphorylases share catalytic and structural properties. This is Alpha-glucan phosphorylase 2, cytosolic (PHS2) from Arabidopsis thaliana (Mouse-ear cress).